We begin with the raw amino-acid sequence, 222 residues long: Kinetochore protein Spc25 (222 aa).

Residues R51–A86 are a coiled coil.

This sequence belongs to the SPC25 family. Component of the Ndc80 complex, which is composed of Ndc80, Nuf2 and Spc25.

The protein localises to the nucleus. It is found in the chromosome. The protein resides in the centromere. Its subcellular location is the kinetochore. Its function is as follows. Acts as a component of the essential kinetochore-associated Ndc80 complex, which is required for chromosome segregation and spindle checkpoint activity during meiosis and mitosis. Required for kinetochore integrity and the organization of stable microtubule binding sites in the outer plate of the kinetochore. Participates in SAC signaling that responds specifically to disruptions in spindle microtubule dynamics. The NDC80 complex synergistically enhances the affinity of the SKA1 complex for microtubules and may allow the NDC80 complex to track depolymerizing microtubules. The chain is Kinetochore protein Spc25 from Drosophila simulans (Fruit fly).